Consider the following 399-residue polypeptide: 1-deoxy-D-xylulose 5-phosphate reductoisomerase (399 aa).

5 residues coordinate NADPH: Thr13, Gly14, Ser15, Ile16, and Asn127. A 1-deoxy-D-xylulose 5-phosphate-binding site is contributed by Lys128. Glu129 is a binding site for NADPH. Asp153 serves as a coordination point for Mn(2+). 1-deoxy-D-xylulose 5-phosphate-binding residues include Ser154, Glu155, Ser187, and His210. Glu155 is a binding site for Mn(2+). Gly216 contributes to the NADPH binding site. The 1-deoxy-D-xylulose 5-phosphate site is built by Ser223, Asn228, Lys229, and Glu232. Mn(2+) is bound at residue Glu232.

Belongs to the DXR family. It depends on Mg(2+) as a cofactor. Mn(2+) serves as cofactor.

It carries out the reaction 2-C-methyl-D-erythritol 4-phosphate + NADP(+) = 1-deoxy-D-xylulose 5-phosphate + NADPH + H(+). It participates in isoprenoid biosynthesis; isopentenyl diphosphate biosynthesis via DXP pathway; isopentenyl diphosphate from 1-deoxy-D-xylulose 5-phosphate: step 1/6. Its function is as follows. Catalyzes the NADPH-dependent rearrangement and reduction of 1-deoxy-D-xylulose-5-phosphate (DXP) to 2-C-methyl-D-erythritol 4-phosphate (MEP). The polypeptide is 1-deoxy-D-xylulose 5-phosphate reductoisomerase (Bordetella avium (strain 197N)).